The sequence spans 1381 residues: DNA-directed RNA polymerase subunit beta' (1381 aa).

Positions 70, 72, 85, and 88 each coordinate Zn(2+). 3 residues coordinate Mg(2+): aspartate 461, aspartate 463, and aspartate 465. Zn(2+) is bound by residues cysteine 801, cysteine 875, cysteine 882, and cysteine 885. The tract at residues 1362 to 1381 (VEIEGDENSNKKSLDMHAAN) is disordered. Residues 1369-1381 (NSNKKSLDMHAAN) are compositionally biased toward basic and acidic residues.

It belongs to the RNA polymerase beta' chain family. The RNAP catalytic core consists of 2 alpha, 1 beta, 1 beta' and 1 omega subunit. When a sigma factor is associated with the core the holoenzyme is formed, which can initiate transcription. The cofactor is Mg(2+). Requires Zn(2+) as cofactor.

The enzyme catalyses RNA(n) + a ribonucleoside 5'-triphosphate = RNA(n+1) + diphosphate. Functionally, DNA-dependent RNA polymerase catalyzes the transcription of DNA into RNA using the four ribonucleoside triphosphates as substrates. The sequence is that of DNA-directed RNA polymerase subunit beta' from Syntrophus aciditrophicus (strain SB).